We begin with the raw amino-acid sequence, 328 residues long: NADH-cytochrome b5 reductase-like protein (328 aa).

Residues 76–184 enclose the FAD-binding FR-type domain; the sequence is DKWLEFKLQD…KGPVEKFKYS (109 aa). The residue at position 201 (threonine 201) is a Phosphothreonine.

The protein belongs to the flavoprotein pyridine nucleotide cytochrome reductase family. FAD is required as a cofactor.

It localises to the mitochondrion. It catalyses the reaction 2 Fe(III)-[cytochrome b5] + NADH = 2 Fe(II)-[cytochrome b5] + NAD(+) + H(+). Its function is as follows. Desaturation and elongation of fatty acids. The polypeptide is NADH-cytochrome b5 reductase-like protein (CBR2) (Arabidopsis thaliana (Mouse-ear cress)).